Here is a 161-residue protein sequence, read N- to C-terminus: Epoxidase gkaX (161 aa).

A signal peptide spans 1–18 (MSLSTSLRLLRLLPAISS). N-linked (GlcNAc...) asparagine glycosylation occurs at N45. 3 consecutive transmembrane segments (helical) span residues 59 to 79 (WQWI…LNLV), 92 to 112 (IWYV…KMAL), and 139 to 159 (WVRA…AAVS).

The protein belongs to the epoxidase xenD family.

The protein localises to the membrane. It participates in mycotoxin biosynthesis. In terms of biological role, epoxidase; part of the gene cluster that mediates the biosynthesis of GKK1032, fungal natural products containing a macrocyclic para-cyclophane connected to a decahydrofluorene ring system that show potent antitumor activities. Within the pathway, gkaX functions synergistically with gkaB and gkaZ to form the cyclophane. The pathway begins with the PKS-NRPS gkaA which, with the help of the trans-enoyl reductase gkaC, synthesizes the polyketide-tyrosyl acyl thioester product which can be reductively off-loaded by the terminal reductase (R) domain in gkaA. The alpha/beta hydrolase gkaG is then required to catalyze the subsequent Knoevenagel condensation that affords the 3-pyrrolin-2-one ring, whereas the three proteins gkaB, gkaX and gkaZ then function synergistically to form the cyclophane. This chain is Epoxidase gkaX, found in Penicillium citrinum.